A 617-amino-acid polypeptide reads, in one-letter code: Membrane protein insertase YidC (617 aa).

Residues 8 to 28 traverse the membrane as a helical segment; it reads MFVAIGLSLLVLLGWQYFVAG. Polar residues predominate over residues 36–49; it reads QIEAQNKAAQQQPP. The interval 36–91 is disordered; that stretch reads QIEAQNKAAQQQPPGVTPDGVPSPSPKEGGPAAPAPGTLPTAQGGPVSREAALARS. Positions 61 to 81 are enriched in low complexity; it reads PKEGGPAAPAPGTLPTAQGGP. 4 helical membrane-spanning segments follow: residues 387 to 407, 461 to 481, 517 to 533, and 549 to 569; these read LFGN…LLFL, WPVL…FITI, FVHL…TMFV, and IFTF…AGLV.

It belongs to the OXA1/ALB3/YidC family. Type 1 subfamily. Interacts with the Sec translocase complex via SecD. Specifically interacts with transmembrane segments of nascent integral membrane proteins during membrane integration.

The protein localises to the cell inner membrane. Its function is as follows. Required for the insertion and/or proper folding and/or complex formation of integral membrane proteins into the membrane. Involved in integration of membrane proteins that insert both dependently and independently of the Sec translocase complex, as well as at least some lipoproteins. Aids folding of multispanning membrane proteins. The protein is Membrane protein insertase YidC of Methylobacterium radiotolerans (strain ATCC 27329 / DSM 1819 / JCM 2831 / NBRC 15690 / NCIMB 10815 / 0-1).